A 662-amino-acid polypeptide reads, in one-letter code: Hypoxia-inducible factor 3-alpha (662 aa).

Residues 1-25 (MDWDQDRSNTELRKEKSRDAARSRR) form a disordered region. Residues 12 to 65 (LRKEKSRDAARSRRSQETEVLYQLAHTLPFARGVSAHLDKASIMRLTISYLRMH) form the bHLH domain. The tract at residues 75-98 (QVEKGGEPLDACYLKALEGFVMVL) is nuclear localization signal (isoform 2). 2 PAS domains span residues 80 to 150 (GEPL…PNLS) and 225 to 295 (PHPA…LSKG). Residues 228–272 (ASLEPPLGRGAFLSRHSLDMKFTYCDERIAEVAGYSPDDLIGCSA) form a nuclear export signal (isoform 2) region. Disordered regions lie at residues 352–377 (EQTE…GNSV) and 416–446 (PILD…DLPD). Positions 414-418 (MAPIL) match the LRRLL motif. Low complexity predominate over residues 426 to 437 (TPSTPQATRRPQ). Positions 448-581 (LTVGLENAHR…SEDKGLELLE (134 aa)) are ODD. The tract at residues 450 to 501 (VGLENAHRLSTAQKNKTVETDLDIAQDPDTLDLEMLAPYISMDDDFQLNSSE) is NTAD. K463 is covalently cross-linked (Glycyl lysine isopeptide (Lys-Gly) (interchain with G-Cter in ubiquitin)). The LAPYISMD signature appears at 485–492 (LAPYISMD). P487 is modified (4-hydroxyproline). The tract at residues 500 to 595 (SEQLPKVHRR…KRSPRLEPGS (96 aa)) is disordered. Positions 505 to 521 (KVHRRPPRVARRPRARS) are enriched in basic residues. Residue K565 forms a Glycyl lysine isopeptide (Lys-Gly) (interchain with G-Cter in ubiquitin) linkage. Residues 572–584 (SEDKGLELLETKP) are compositionally biased toward basic and acidic residues.

Isoform 1 interacts with ARNT. Isoform 2 interacts with HIF1A. Isoform 2 interacts EPAS1. Isoform 2 interacts (via C-terminus domain) with BAD; the interaction reduces the binding between BAD and BAX. Isoform 2 (via C-terminus domain) interacts with BCL2L2 and MCL1. Interacts with VHL. In normoxia, hydroxylated on Pro-487 in the oxygen-dependent degradation domain (ODD) by PHD. The hydroxylated proline promotes interaction with VHL, initiating rapid ubiquitination and subsequent proteasomal degradation. Post-translationally, ubiquitinated; ubiquitination occurs in a VHL- and oxygen-dependent pathway and subsequently targeted for proteasomal degradation. As to expression, isoform 3 is expressed in endothelial cells of vessels and capillaries in alveoli of the neonatal lung (at protein level). Expressed in lung, brain, heart and kidney. Isoform 2 is expressed in heart and lung. Isoform 2 is highly expressed in the epithelial cell layer of the cornea with lower expression in the layers of ganglion cells, inner nuclear cells, and rods and cones of the retina. Isoform 2 is expressed in the cerebellum only in the Purkinje cell layer.

It is found in the nucleus. Its subcellular location is the cytoplasm. The protein resides in the nucleus speckle. It localises to the mitochondrion. Its function is as follows. Acts as a transcriptional regulator in adaptive response to low oxygen tension. Acts as a regulator of hypoxia-inducible gene expression. Plays a role in the development of the cardiorespiratory system. Acts as a positive regulator of hypoxia-inducible gene expression. Associates to core DNA sequence 5'-TACGTG-3' within the hypoxia response element (HRE) of target gene promoters in a ARNT-dependent manner, and hence also participates in the transcriptional activation of reporter genes driven by HRE. Functionally, attenuates the ability of transcription factor HIF1A, EPAS1 and the HIF1A-ARNT complex to bind to hypoxia-responsive elements (HRE) located within the enhancer/promoter of hypoxia-inducible target genes and hence inhibits HRE-driven transcriptional activation. Functions as an inhibitor of angiogenesis in hypoxic cells of the cornea. May act as a tumor suppressor. May also be involved in apoptosis. In terms of biological role, attenuates the ability of transcription factor HIF1A, EPAS1 and the HIF1A-ARNT complex to bind to hypoxia-responsive elements (HRE) located within the enhancer/promoter of hypoxia-inducible target genes and hence inhibits HRE-driven transcriptional activation. Also plays a role in the development of the lung and heart during embryonic and neonatal stages. The sequence is that of Hypoxia-inducible factor 3-alpha from Mus musculus (Mouse).